The primary structure comprises 471 residues: Soluble pyridine nucleotide transhydrogenase (471 aa).

41 to 50 (EREPSVGGGC) serves as a coordination point for FAD.

Belongs to the class-I pyridine nucleotide-disulfide oxidoreductase family. FAD serves as cofactor.

It is found in the cytoplasm. The catalysed reaction is NAD(+) + NADPH = NADH + NADP(+). Its function is as follows. Conversion of NADPH, generated by peripheral catabolic pathways, to NADH, which can enter the respiratory chain for energy generation. This Aliivibrio fischeri (strain ATCC 700601 / ES114) (Vibrio fischeri) protein is Soluble pyridine nucleotide transhydrogenase.